A 214-amino-acid chain; its full sequence is ATP phosphoribosyltransferase (214 aa).

Belongs to the ATP phosphoribosyltransferase family. Short subfamily. As to quaternary structure, heteromultimer composed of HisG and HisZ subunits.

It localises to the cytoplasm. The enzyme catalyses 1-(5-phospho-beta-D-ribosyl)-ATP + diphosphate = 5-phospho-alpha-D-ribose 1-diphosphate + ATP. Its pathway is amino-acid biosynthesis; L-histidine biosynthesis; L-histidine from 5-phospho-alpha-D-ribose 1-diphosphate: step 1/9. Functionally, catalyzes the condensation of ATP and 5-phosphoribose 1-diphosphate to form N'-(5'-phosphoribosyl)-ATP (PR-ATP). Has a crucial role in the pathway because the rate of histidine biosynthesis seems to be controlled primarily by regulation of HisG enzymatic activity. The chain is ATP phosphoribosyltransferase from Deinococcus deserti (strain DSM 17065 / CIP 109153 / LMG 22923 / VCD115).